The primary structure comprises 757 residues: Nitrogen fixation protein FixI (757 aa).

Residues 1 to 121 (MSCCASSAAI…GEEEGDDLLK (121 aa)) are Cytoplasmic-facing. Residues 37–107 (RQTELSVPNA…AIAERGYQTH (71 aa)) enclose the HMA domain. Residues Cys-48 and Cys-51 each contribute to the a metal cation site. The helical transmembrane segment at 122-143 (QLILAVAVSGFAATNIMLLSVS) threads the bilayer. Over 144–158 (VWSGADAATRDLFHW) the chain is Extracellular. The chain crosses the membrane as a helical span at residues 159–178 (ISALIAGPALIYAGRFFYKS). Topologically, residues 179–185 (AWNAIRH) are cytoplasmic. The helical transmembrane segment at 186-206 (GRTNMDVPIALAVSLSYGMSL) threads the bilayer. The Extracellular segment spans residues 207–218 (HETIGHGEHAWF). Residues 219–239 (DASVTLLFFLLIGRTLDHMMR) traverse the membrane as a helical segment. Topologically, residues 240–368 (GRARTAISGL…RARYRRIADR (129 aa)) are cytoplasmic. Residues 369 to 391 (AARYYSPAVHLLALLTFVGWMLV) form a helical membrane-spanning segment. The Extracellular segment spans residues 392 to 398 (EGDVRHA). Residues 399–416 (MLVAVAVLIITCPCALGL) traverse the membrane as a helical segment. Topologically, residues 417-688 (AVPVVQVVAA…ETSRHAGQLI (272 aa)) are cytoplasmic. Residue Asp-454 is the 4-aspartylphosphate intermediate of the active site. Mg(2+) is bound by residues Asp-634 and Asp-638. Residues 689-708 (RQNFALAIGYNVIAVPIAIL) form a helical membrane-spanning segment. The Extracellular segment spans residues 709–713 (GYATP). A helical membrane pass occupies residues 714 to 732 (LVAAVAMSSSSLVVVFNAL). The Cytoplasmic portion of the chain corresponds to 733–757 (RLKRSLAAGRGATPGTLIHSGAVTS).

It belongs to the cation transport ATPase (P-type) (TC 3.A.3) family. Type IB subfamily.

Its subcellular location is the cell membrane. It carries out the reaction ATP + H2O = ADP + phosphate + H(+). Functionally, fixI is a pump of a specific cation involved in symbiotic nitrogen fixation. The four proteins FixG, FixH, FixI, and FixS may participate in a membrane-bound complex coupling the FixI cation pump with a redox process catalyzed by FixG. The protein is Nitrogen fixation protein FixI (fixI) of Rhizobium meliloti (strain 1021) (Ensifer meliloti).